Reading from the N-terminus, the 180-residue chain is UPF0227 protein CKO_01948 (180 aa).

The protein belongs to the UPF0227 family.

In Citrobacter koseri (strain ATCC BAA-895 / CDC 4225-83 / SGSC4696), this protein is UPF0227 protein CKO_01948.